The sequence spans 238 residues: Histone deacetylase 7 (238 aa).

2 disordered regions span residues 1-26 (TPGSQPQPMDLRVGQRPTVEPPPEPA) and 47-72 (QQQRSAEPMRLSMDPPLPELQGGQQE). The tract at residues 58–158 (SMDPPLPELQ…LPTEPPEHFP (101 aa)) is interaction with MEF2A. S118 and S164 each carry phosphoserine. Residues 145–238 (PVPSLPTEPP…NPALGSEADG (94 aa)) are disordered. Residues 176–190 (KSLERRKNPLLRKES) show a composition bias toward basic and acidic residues. Phosphoserine; by PKD/PRKD2 is present on S190. Residues 206-221 (SSPSSSSTPASGCSSP) are compositionally biased toward low complexity.

Belongs to the histone deacetylase family. HD type 2 subfamily. Interacts with HDAC1, HDAC2, HDAC3, HDAC4, HDAC5, NCOR1, NCOR2, SIN3A, SIN3B, RBBP4, RBBP7, MTA1L1, SAP30 and MBD3. Interacts with KAT5 and EDNRA. Interacts with the 14-3-3 protein YWHAE, MEF2A, MEF2B and MEF2C. Interacts with ZMYND15. Interacts with KDM5B. Interacts with PML. Interacts with FOXP3. Interacts with RARA. May be phosphorylated by CaMK1. Phosphorylated by the PKC kinases PKN1 and PKN2, impairing nuclear import. Phosphorylation at Ser-164 by MARK2, MARK3 and PRKD1 promotes interaction with 14-3-3 proteins and export from the nucleus. Phosphorylation at Ser-164 is a prerequisite for phosphorylation at Ser-190.

The protein localises to the nucleus. It is found in the cytoplasm. The catalysed reaction is N(6)-acetyl-L-lysyl-[histone] + H2O = L-lysyl-[histone] + acetate. The enzyme catalyses N(6)-acetyl-L-lysyl-[protein] + H2O = L-lysyl-[protein] + acetate. Responsible for the deacetylation of lysine residues on the N-terminal part of the core histones (H2A, H2B, H3 and H4). Histone deacetylation gives a tag for epigenetic repression and plays an important role in transcriptional regulation, cell cycle progression and developmental events. Histone deacetylases act via the formation of large multiprotein complexes. Involved in muscle maturation by repressing transcription of myocyte enhancer factors such as MEF2A, MEF2B and MEF2C. During muscle differentiation, it shuttles into the cytoplasm, allowing the expression of myocyte enhancer factors. May be involved in Epstein-Barr virus (EBV) latency, possibly by repressing the viral BZLF1 gene. Positively regulates the transcriptional repressor activity of FOXP3. Serves as a corepressor of RARA, causing its deacetylation and inhibition of RARE DNA element binding. In association with RARA, plays a role in the repression of microRNA-10a and thereby in the inflammatory response. Also acetylates non-histone proteins, such as ALKBH5. In Rattus norvegicus (Rat), this protein is Histone deacetylase 7 (Hdac7).